The sequence spans 465 residues: MGFMRKADFELYRDADKHYNQVLTTRDFLALGVGTIISTSIFTLPGQVAAQFAGPGVVFSYLLAALVAGFVALAYAEMSTVMPFAGSAYSWISVLFGEGFGWIAGWALLAEYFIAVAFVGSGFSANLQQLLAPLGFQLPKVLANPFGTDGGIVDIISLLVILLSAIIVFRGASDAGRISQILVVLKVAAVIAFIIVGITVIKPANYHPFIPPHNPKTGFGGFSGIWSGVSMIFLAYIGFDSIAANSAEAKNPQKTMPRGIIGSLLIAVVLFAAVTLVLVGMHPYSAYAGNAAPVGWALQQSGYSVLSEVVTAIALAGMFIALLGMVLAGSRLLYAFGRDGLLPKGLGKMNARNLPANGVWTLAIVAIVIGAFFPFAFLAQLISAGTLIAFMFVTLGIYSLRRRQGKDLPEATYKMPFYPVLPALGFIGSLFVFWGLDVQAKLYSGIWFLIGIAIYFAYGNRRKKK.

Transmembrane regions (helical) follow at residues 28–48 (FLALGVGTIISTSIFTLPGQV), 56–76 (GVVFSYLLAALVAGFVALAYA), 88–110 (AYSWISVLFGEGFGWIAGWALLA), 149–169 (DGGIVDIISLLVILLSAIIVF), 181–201 (ILVVLKVAAVIAFIIVGITVI), 219–239 (FGGFSGIWSGVSMIFLAYIGF), 259–279 (GIIGSLLIAVVLFAAVTLVLV), 309–329 (VVTAIALAGMFIALLGMVLAG), 359–379 (VWTLAIVAIVIGAFFPFAFLA), 380–400 (QLISAGTLIAFMFVTLGIYSL), 416–436 (PFYPVLPALGFIGSLFVFWGL), and 438–458 (VQAKLYSGIWFLIGIAIYFAY).

This sequence belongs to the amino acid-polyamine-organocation (APC) superfamily.

Its subcellular location is the cell membrane. In terms of biological role, branched-chain amino acid transport system that specifically transports branched-chain amino acids (BCAAs) (isoleucine, leucine and valine) and, to a lesser extent, methionine. Important for CodY-mediated regulation, and required for optimal growth in media containing free amino acids as the only amino acid source. The polypeptide is Branched-chain amino acid permease BcaP (Lactococcus lactis subsp. cremoris (strain MG1363)).